Consider the following 510-residue polypeptide: D-alanine--D-alanyl carrier protein ligase (510 aa).

Residue 157 to 158 (TS) participates in ATP binding. Asp-202 contributes to the D-alanine binding site. 297–302 (NTYGPT) is an ATP binding site. Residue Val-306 coordinates D-alanine. Asp-389 and Lys-498 together coordinate ATP. Lys-498 contributes to the D-alanine binding site.

It belongs to the ATP-dependent AMP-binding enzyme family. DltA subfamily.

Its subcellular location is the cytoplasm. The enzyme catalyses holo-[D-alanyl-carrier protein] + D-alanine + ATP = D-alanyl-[D-alanyl-carrier protein] + AMP + diphosphate. It participates in cell wall biogenesis; lipoteichoic acid biosynthesis. Its function is as follows. Catalyzes the first step in the D-alanylation of lipoteichoic acid (LTA), the activation of D-alanine and its transfer onto the D-alanyl carrier protein (Dcp) DltC. In an ATP-dependent two-step reaction, forms a high energy D-alanyl-AMP intermediate, followed by transfer of the D-alanyl residue as a thiol ester to the phosphopantheinyl prosthetic group of the Dcp. D-alanylation of LTA plays an important role in modulating the properties of the cell wall in Gram-positive bacteria, influencing the net charge of the cell wall. This Listeria monocytogenes serotype 4b (strain F2365) protein is D-alanine--D-alanyl carrier protein ligase.